A 581-amino-acid chain; its full sequence is Arginine--tRNA ligase (581 aa).

Positions 126-136 match the 'HIGH' region motif; the sequence is PNLAKEMHVGH.

It belongs to the class-I aminoacyl-tRNA synthetase family. In terms of assembly, monomer.

The protein resides in the cytoplasm. The catalysed reaction is tRNA(Arg) + L-arginine + ATP = L-arginyl-tRNA(Arg) + AMP + diphosphate. The chain is Arginine--tRNA ligase from Shewanella frigidimarina (strain NCIMB 400).